The primary structure comprises 585 residues: Formate--tetrahydrofolate ligase (585 aa).

65–72 contributes to the ATP binding site; the sequence is TPHGEGKT.

It belongs to the formate--tetrahydrofolate ligase family.

The catalysed reaction is (6S)-5,6,7,8-tetrahydrofolate + formate + ATP = (6R)-10-formyltetrahydrofolate + ADP + phosphate. The protein operates within one-carbon metabolism; tetrahydrofolate interconversion. This is Formate--tetrahydrofolate ligase from Shewanella baltica (strain OS155 / ATCC BAA-1091).